The primary structure comprises 446 residues: Tubulin beta chain (446 aa).

Residues Gln-11, Glu-69, Ser-138, Gly-142, Thr-143, Gly-144, Asn-204, and Asn-226 each coordinate GTP. Position 69 (Glu-69) interacts with Mg(2+). The tract at residues 423-446 (QQYQDATADEEEGEYEEEPAEEEQ) is disordered. Acidic residues predominate over residues 429 to 446 (TADEEEGEYEEEPAEEEQ).

The protein belongs to the tubulin family. As to quaternary structure, dimer of alpha and beta chains. A typical microtubule is a hollow water-filled tube with an outer diameter of 25 nm and an inner diameter of 15 nM. Alpha-beta heterodimers associate head-to-tail to form protofilaments running lengthwise along the microtubule wall with the beta-tubulin subunit facing the microtubule plus end conferring a structural polarity. Microtubules usually have 13 protofilaments but different protofilament numbers can be found in some organisms and specialized cells. The cofactor is Mg(2+).

The protein resides in the cytoplasm. It localises to the cytoskeleton. Functionally, tubulin is the major constituent of microtubules, a cylinder consisting of laterally associated linear protofilaments composed of alpha- and beta-tubulin heterodimers. Microtubules grow by the addition of GTP-tubulin dimers to the microtubule end, where a stabilizing cap forms. Below the cap, tubulin dimers are in GDP-bound state, owing to GTPase activity of alpha-tubulin. The sequence is that of Tubulin beta chain from Pleurotus sajor-caju (Oyster mushroom).